We begin with the raw amino-acid sequence, 120 residues long: Accessory gland protein Acp53Ea (120 aa).

Residues 1–23 form the signal peptide; that stretch reads MKLIKVTLVFSLLALVFVAQTEA.

As to expression, main cells of accessory gland and seminal fluid.

The protein localises to the secreted. Responsible for physiological and behavioral changes in mated female flies. This chain is Accessory gland protein Acp53Ea (Acp53Ea), found in Drosophila melanogaster (Fruit fly).